We begin with the raw amino-acid sequence, 503 residues long: tRNA-guanine(15) transglycosylase (503 aa).

Asp86 acts as the Nucleophile in catalysis. Position 121 (Asp121) interacts with substrate. Zn(2+) contacts are provided by Cys278, Cys280, and Cys283.

It belongs to the archaeosine tRNA-ribosyltransferase family. Zn(2+) is required as a cofactor.

It catalyses the reaction guanosine(15) in tRNA + 7-cyano-7-deazaguanine = 7-cyano-7-carbaguanosine(15) in tRNA + guanine. It functions in the pathway tRNA modification; archaeosine-tRNA biosynthesis. Exchanges the guanine residue with 7-cyano-7-deazaguanine (preQ0) at position 15 in the dihydrouridine loop (D-loop) of archaeal tRNAs. The protein is tRNA-guanine(15) transglycosylase of Saccharolobus solfataricus (strain ATCC 35092 / DSM 1617 / JCM 11322 / P2) (Sulfolobus solfataricus).